A 97-amino-acid polypeptide reads, in one-letter code: Large ribosomal subunit protein bL28 (97 aa).

It belongs to the bacterial ribosomal protein bL28 family.

In Bartonella henselae (strain ATCC 49882 / DSM 28221 / CCUG 30454 / Houston 1) (Rochalimaea henselae), this protein is Large ribosomal subunit protein bL28.